We begin with the raw amino-acid sequence, 280 residues long: Ribonuclease Z (280 aa).

Zn(2+) contacts are provided by His-61, His-63, Asp-65, His-66, His-153, Asp-176, and His-240. Asp-65 serves as the catalytic Proton acceptor.

It belongs to the RNase Z family. In terms of assembly, homodimer. It depends on Zn(2+) as a cofactor.

The enzyme catalyses Endonucleolytic cleavage of RNA, removing extra 3' nucleotides from tRNA precursor, generating 3' termini of tRNAs. A 3'-hydroxy group is left at the tRNA terminus and a 5'-phosphoryl group is left at the trailer molecule.. Its function is as follows. Zinc phosphodiesterase, which displays some tRNA 3'-processing endonuclease activity. Probably involved in tRNA maturation, by removing a 3'-trailer from precursor tRNA. The sequence is that of Ribonuclease Z from Mycolicibacterium paratuberculosis (strain ATCC BAA-968 / K-10) (Mycobacterium paratuberculosis).